A 1052-amino-acid chain; its full sequence is uncharacterized protein (1052 aa).

It belongs to the IIV-6 050L family.

This is an uncharacterized protein from Invertebrate iridescent virus 6 (IIV-6).